We begin with the raw amino-acid sequence, 263 residues long: Mediator of RNA polymerase II transcription subunit 7 (263 aa).

Positions 1–10 (MADAAQQRTL) are enriched in polar residues. 3 disordered regions span residues 1 to 57 (MADA…PAEL), 101 to 122 (ITQL…SEPS), and 222 to 247 (GIAA…QKTI). Positions 24–47 (FTPDNLKRLEEIKKEASKGEDGKP) are enriched in basic and acidic residues. Residues 101–111 (ITQLYPSSSPA) are compositionally biased toward polar residues. Residues 234-247 (EDGRKESETSQKTI) show a composition bias toward basic and acidic residues.

Belongs to the Mediator complex subunit 7 family. Component of the Mediator complex.

It localises to the nucleus. Functionally, component of the Mediator complex, a coactivator involved in the regulated transcription of nearly all RNA polymerase II-dependent genes. Mediator functions as a bridge to convey information from gene-specific regulatory proteins to the basal RNA polymerase II transcription machinery. Mediator is recruited to promoters by direct interactions with regulatory proteins and serves as a scaffold for the assembly of a functional preinitiation complex with RNA polymerase II and the general transcription factors. This chain is Mediator of RNA polymerase II transcription subunit 7 (med7), found in Aspergillus niger (strain ATCC MYA-4892 / CBS 513.88 / FGSC A1513).